Here is a 297-residue protein sequence, read N- to C-terminus: 33 kDa chaperonin (297 aa).

2 disulfide bridges follow: Cys-232–Cys-234 and Cys-266–Cys-269.

Belongs to the HSP33 family. In terms of processing, under oxidizing conditions two disulfide bonds are formed involving the reactive cysteines. Under reducing conditions zinc is bound to the reactive cysteines and the protein is inactive.

It is found in the cytoplasm. In terms of biological role, redox regulated molecular chaperone. Protects both thermally unfolding and oxidatively damaged proteins from irreversible aggregation. Plays an important role in the bacterial defense system toward oxidative stress. The protein is 33 kDa chaperonin of Pseudomonas aeruginosa (strain LESB58).